The sequence spans 294 residues: Decaprenyl-diphosphate synthase subunit 2 (294 aa).

It belongs to the FPP/GGPP synthase family. As to quaternary structure, heterotetramer of 2 dps1 and 2 dlp1 subunits.

The protein localises to the mitochondrion. The enzyme catalyses 7 isopentenyl diphosphate + (2E,6E)-farnesyl diphosphate = all-trans-decaprenyl diphosphate + 7 diphosphate. It functions in the pathway cofactor biosynthesis; ubiquinone biosynthesis. Its function is as follows. Supplies decaprenyl diphosphate, the precursor for the side chain of the isoprenoid quinones ubiquinone-10. The polypeptide is Decaprenyl-diphosphate synthase subunit 2 (dlp1) (Schizosaccharomyces pombe (strain 972 / ATCC 24843) (Fission yeast)).